A 170-amino-acid polypeptide reads, in one-letter code: Aspartate 1-decarboxylase (170 aa).

Residue Ser-25 is the Schiff-base intermediate with substrate; via pyruvic acid of the active site. Position 25 is a pyruvic acid (Ser) (Ser-25). Residue Thr-57 participates in substrate binding. The Proton donor role is filled by Tyr-58. Substrate is bound at residue 73–75; that stretch reads GAA. The disordered stretch occupies residues 118-170; sequence GHDPAEALPDDPSSLRGDLAVPGNPVTAAARRGTPTHQAPVALPASRTVVAPR.

It belongs to the PanD family. As to quaternary structure, heterooctamer of four alpha and four beta subunits. Requires pyruvate as cofactor. Post-translationally, is synthesized initially as an inactive proenzyme, which is activated by self-cleavage at a specific serine bond to produce a beta-subunit with a hydroxyl group at its C-terminus and an alpha-subunit with a pyruvoyl group at its N-terminus.

Its subcellular location is the cytoplasm. The enzyme catalyses L-aspartate + H(+) = beta-alanine + CO2. Its pathway is cofactor biosynthesis; (R)-pantothenate biosynthesis; beta-alanine from L-aspartate: step 1/1. In terms of biological role, catalyzes the pyruvoyl-dependent decarboxylation of aspartate to produce beta-alanine. This chain is Aspartate 1-decarboxylase, found in Frankia alni (strain DSM 45986 / CECT 9034 / ACN14a).